Consider the following 466-residue polypeptide: Xanthine permease XanQ (466 aa).

Residues 1–44 (MSDINHAGSDLIFELEDRPPFHQALVGAITHLLAIFVPMVTPAL) lie on the Cytoplasmic side of the membrane. Residues 45–65 (IVGAALQLSAETTAYLVSMAM) traverse the membrane as a helical segment. The Periplasmic segment spans residues 66 to 74 (IASGIGTWL). Residues 75–95 (QVNRYGIVGSGLLSIQSVNFS) form a helical membrane-spanning segment. Residues 96-99 (FVTV) are Cytoplasmic-facing. The helical transmembrane segment at 100–120 (MIALGSSMKSDGFHEELIMSS) threads the bilayer. Over 121-139 (LLGVSFVGAFLVVGSSFIL) the chain is Periplasmic. A helical transmembrane segment spans residues 140 to 160 (PYLRRVITPTVSGIVVLMIGL). At 161–170 (SLIKVGIIDF) the chain is on the cytoplasmic side. The helical transmembrane segment at 171–191 (GGGFAAKSSGTFGNYEHLGVG) threads the bilayer. The Periplasmic portion of the chain corresponds to 192-199 (LLVLIVVI). A helical transmembrane segment spans residues 200 to 220 (GFNCCRSPLLRMGGIAIGLCV). At 221 to 229 (GYIASLCLG) the chain is on the cytoplasmic side. Residues 230–250 (MVDFSSMRNLPLITIPHPFKY) traverse the membrane as a helical segment. Residues 251 to 277 (GFSFSFHQFLVVGTIYLLSVLEAVGDI) lie on the Periplasmic side of the membrane. A helical transmembrane segment spans residues 278–298 (TATAMVSRRPIQGEEYQSRLK). Residues 299–317 (GGVLADGLVSVIASAVGSL) lie on the Cytoplasmic side of the membrane. A helical membrane pass occupies residues 318-338 (PLTTFAQNNGVIQMTGVASRY). The Periplasmic portion of the chain corresponds to 339–361 (VGRTIAVMLVILGLFPMIGGFFT). The helical transmembrane segment at 362-382 (TIPSAVLGGAMTLMFSMIAIA) threads the bilayer. Glycine 383 is a topological domain (cytoplasmic). Residues 384–403 (IRIIITNGLKRRETLIVATS) traverse the membrane as a helical segment. The Periplasmic portion of the chain corresponds to 404 to 444 (LGLGLGVSYDPEIFKILPASIYVLVENPICAGGLTAILLNI). A helical membrane pass occupies residues 445 to 465 (ILPGGYRQENVLPGITSAEEM). Aspartate 466 is a topological domain (cytoplasmic).

This sequence belongs to the nucleobase:cation symporter-2 (NCS2) (TC 2.A.40) family.

It is found in the cell inner membrane. The catalysed reaction is xanthine(in) + H(+)(in) = xanthine(out) + H(+)(out). Its function is as follows. Specific, proton motive force-dependent high-affinity transporter for xanthine. The protein is Xanthine permease XanQ (xanQ) of Escherichia coli O157:H7.